A 104-amino-acid polypeptide reads, in one-letter code: Large ribosomal subunit protein bL21 (104 aa).

It belongs to the bacterial ribosomal protein bL21 family. In terms of assembly, part of the 50S ribosomal subunit. Contacts protein L20.

Functionally, this protein binds to 23S rRNA in the presence of protein L20. This Helicobacter pylori (strain HPAG1) protein is Large ribosomal subunit protein bL21.